The following is a 266-amino-acid chain: Tryptophan synthase alpha chain (266 aa).

Active-site proton acceptor residues include Glu49 and Asp60.

Belongs to the TrpA family. In terms of assembly, tetramer of two alpha and two beta chains.

The enzyme catalyses (1S,2R)-1-C-(indol-3-yl)glycerol 3-phosphate + L-serine = D-glyceraldehyde 3-phosphate + L-tryptophan + H2O. It participates in amino-acid biosynthesis; L-tryptophan biosynthesis; L-tryptophan from chorismate: step 5/5. In terms of biological role, the alpha subunit is responsible for the aldol cleavage of indoleglycerol phosphate to indole and glyceraldehyde 3-phosphate. The sequence is that of Tryptophan synthase alpha chain from Opitutus terrae (strain DSM 11246 / JCM 15787 / PB90-1).